The following is a 192-amino-acid chain: Peptidyl-tRNA hydrolase (192 aa).

Tyr-14 is a tRNA binding site. The Proton acceptor role is filled by His-19. TRNA-binding residues include Tyr-64, Asn-66, and Asn-112.

The protein belongs to the PTH family. In terms of assembly, monomer.

The protein localises to the cytoplasm. The enzyme catalyses an N-acyl-L-alpha-aminoacyl-tRNA + H2O = an N-acyl-L-amino acid + a tRNA + H(+). In terms of biological role, hydrolyzes ribosome-free peptidyl-tRNAs (with 1 or more amino acids incorporated), which drop off the ribosome during protein synthesis, or as a result of ribosome stalling. Catalyzes the release of premature peptidyl moieties from peptidyl-tRNA molecules trapped in stalled 50S ribosomal subunits, and thus maintains levels of free tRNAs and 50S ribosomes. This is Peptidyl-tRNA hydrolase from Anaeromyxobacter sp. (strain K).